The chain runs to 66 residues: Large ribosomal subunit protein bL35 (66 aa).

Basic residues predominate over residues 1–44 (MPKLKSHRGAAKRFRKTASGAIKRRGAYRNHILTKKSTKQKRHL). The tract at residues 1 to 48 (MPKLKSHRGAAKRFRKTASGAIKRRGAYRNHILTKKSTKQKRHLRVEA) is disordered.

The protein belongs to the bacterial ribosomal protein bL35 family.

This chain is Large ribosomal subunit protein bL35, found in Legionella pneumophila (strain Corby).